The sequence spans 357 residues: Probable protein phosphatase 2C 60 (357 aa).

A PPM-type phosphatase domain is found at 23 to 329; it reads RYGLSSMQGW…DNMTMILVRF (307 aa). The Mn(2+) site is built by D57, G58, D272, and D320. Positions 331–357 are disordered; that stretch reads NPTPSETELKPEASQAEGNHDEPSSSN. A compositionally biased stretch (basic and acidic residues) spans 348-357; that stretch reads GNHDEPSSSN.

Belongs to the PP2C family. Mg(2+) is required as a cofactor. Mn(2+) serves as cofactor.

The enzyme catalyses O-phospho-L-seryl-[protein] + H2O = L-seryl-[protein] + phosphate. It carries out the reaction O-phospho-L-threonyl-[protein] + H2O = L-threonyl-[protein] + phosphate. The chain is Probable protein phosphatase 2C 60 from Arabidopsis thaliana (Mouse-ear cress).